The following is a 164-amino-acid chain: Endoribonuclease YbeY (164 aa).

Residues H117, H121, and H127 each contribute to the Zn(2+) site.

Belongs to the endoribonuclease YbeY family. Zn(2+) serves as cofactor.

It is found in the cytoplasm. Its function is as follows. Single strand-specific metallo-endoribonuclease involved in late-stage 70S ribosome quality control and in maturation of the 3' terminus of the 16S rRNA. The sequence is that of Endoribonuclease YbeY from Mycoplasma mycoides subsp. mycoides SC (strain CCUG 32753 / NCTC 10114 / PG1).